The primary structure comprises 996 residues: Protein psiR (996 aa).

The signal sequence occupies residues 1 to 21 (MKKIILMLLLFSIFFILKSES). Residues Asn-79, Asn-117, Asn-323, Asn-396, Asn-428, Asn-474, Asn-500, Asn-645, and Asn-779 are each glycosylated (N-linked (GlcNAc...) asparagine). The PA14 domain maps to 105–250 (QSLSNPNIYS…YDECGVCEGD (146 aa)).

Belongs to the prespore-cell-inducing factor family.

The protein resides in the secreted. This is Protein psiR (psiR) from Dictyostelium discoideum (Social amoeba).